Reading from the N-terminus, the 1211-residue chain is MGSKALITSPDISSGQLYIKLPTFFHLYVWPFALFVYPYIGYVYQNKLYSEEVRYLTYIAVGTIHALFWLAGEWNTKVYCLMTCRKTDKVEQATHILVTPSKIGESSSVEPITKLVLPDSQTIQYSFSFQRKRFIYEPEKGCFANITFPMDEPSTIGTLKKSTGLTNIQSEIFLYRYGKNCFDIPIPTFGTLFKEHAVAPFFVFQIFCCVLWCLDDYWYFSLFSMFMIIALECSVVWQRQRTLTEFRTMSIKPYEIQVYRNKHWFPISTEDLLPNDVVSVLHNKEDSGLPCDLLLLSGSCVVNEAMLSGESTPLVKESIELRPEEAVIDVDELDKNAVLFGGTRVLQVTQSPFCKLKTPDNGVPAIVLRTGFETSQGSLVRTMVFSSEKVTANNRESLYFILFLLVFAIAASGYVWHVGSKTERSRYKLMLDCVMIITSVVPSELPMELSMAVNASLGALSKYYIYCTEPFRIPLSGHLDICCFDKTGTLTEEHMVVQGIAGVNRKDPYSLEKLSDASNDAILAIATAHTLVLLEQEGETPKVVGDPMEKATVENLGWSIEKKNFVSAPEGSVFYKGKVQIIRNFQFSSALKRQSSVSNVRVSGGSFKTFVSVKGAPEVIATMLREVPKDYEKIYKDYGRKGSRVLALGYKYFKNYIPENQVSDLSRESIESDLVFAGFLIFTSPLKEDARQTVQMLNNSSHRCMMITGDNPLTAVYVAEQVGIVEKPTLVLDIKHENEKILEWKSTDDTINLPMNPHKSLEASLYEKYDLCITGRALSQIINPDVIMSIFTHAWVYARVSPSQKEFMISTLKHNGYITLMCGDGTNDVGALKQAHVGVALLNASEEDMLEMQERARNQKLMGVYEKQIQLAKRFNLPTPPVPPALCHAFPPGPNNPHREKTQEGLNKVLEDLETKKASDVQLTEAEKAAERRANLANKMFDTLANASDDEAPKLKLGDASVAAPFTSKLAVVSSITNIVRQGRCTLVALVQMHKILALNCLITAYSLSVLHLDGIKFGDTQYTISGMLMSVCFYCVSRARPLETLSKERPQAGIFNTYIIGSVLGQFAIHIVTLIYITRVVYLYEDPLEKVDLEETFKPSLLNTAIYLLQLIQQVSTFAINYQGRPFREALSENKGMYYGLLGIAFVAIAGVTEFSPELNAKLQLVKMAYNFQIQLLATMVVDYAACWIIEELMKKYFRDNKPKEIVLRN.

At 1-23 (MGSKALITSPDISSGQLYIKLPT) the chain is on the cytoplasmic side. A helical membrane pass occupies residues 24-44 (FFHLYVWPFALFVYPYIGYVY). Topologically, residues 45–54 (QNKLYSEEVR) are lumenal. The chain crosses the membrane as a helical span at residues 55–75 (YLTYIAVGTIHALFWLAGEWN). Topologically, residues 76–191 (TKVYCLMTCR…FDIPIPTFGT (116 aa)) are cytoplasmic. The segment at 155-185 (TIGTLKKSTGLTNIQSEIFLYRYGKNCFDIP) is A-domain; part 1. Residues 192–212 (LFKEHAVAPFFVFQIFCCVLW) traverse the membrane as a helical segment. Over 213-216 (CLDD) the chain is Lumenal. A helical transmembrane segment spans residues 217 to 237 (YWYFSLFSMFMIIALECSVVW). The Cytoplasmic portion of the chain corresponds to 238 to 397 (QRQRTLTEFR…EKVTANNRES (160 aa)). Positions 250–388 (SIKPYEIQVY…LVRTMVFSSE (139 aa)) are A-domain; part 2. Residues 398-418 (LYFILFLLVFAIAASGYVWHV) form a helical membrane-spanning segment. At 419–1057 (GSKTERSRYK…KERPQAGIFN (639 aa)) the chain is on the lumenal side. The P-domain; part 1 stretch occupies residues 464-493 (YIYCTEPFRIPLSGHLDICCFDKTGTLTEE). D485 functions as the 4-aspartylphosphate intermediate in the catalytic mechanism. D485 and T487 together coordinate Mg(2+). ATP is bound by residues 485–487 (DKT), F587, R644, D710, and 824–828 (DGTND). The tract at residues 495-685 (MVVQGIAGVN…FAGFLIFTSP (191 aa)) is N-domain. Positions 688 to 845 (EDARQTVQML…HVGVALLNAS (158 aa)) are P-domain; part 2. D824 contacts Mg(2+). Residues 846 to 955 (EEDMLEMQER…NASDDEAPKL (110 aa)) form an arm-like region. Residues 956–971 (KLGDASVAAPFTSKLA) are P-domain; part 3. The chain crosses the membrane as a helical span at residues 1058–1078 (TYIIGSVLGQFAIHIVTLIYI). Residues 1079–1100 (TRVVYLYEDPLEKVDLEETFKP) lie on the Cytoplasmic side of the membrane. The helical transmembrane segment at 1101–1121 (SLLNTAIYLLQLIQQVSTFAI) threads the bilayer. Residues 1122–1136 (NYQGRPFREALSENK) lie on the Lumenal side of the membrane. Residues 1137–1157 (GMYYGLLGIAFVAIAGVTEFS) form a helical membrane-spanning segment. The Cytoplasmic segment spans residues 1158 to 1174 (PELNAKLQLVKMAYNFQ). The chain crosses the membrane as a helical span at residues 1175–1195 (IQLLATMVVDYAACWIIEELM). The Lumenal segment spans residues 1196–1211 (KKYFRDNKPKEIVLRN).

The protein belongs to the cation transport ATPase (P-type) (TC 3.A.3) family. Type V subfamily. Requires Mg(2+) as cofactor.

It localises to the endoplasmic reticulum membrane. The catalysed reaction is [protein]-with a C-terminal TM segment(out) + ATP + H2O = [protein]-with a C-terminal TM segment(in) + ADP + phosphate + H(+). Endoplasmic reticulum translocase required to remove mitochondrial transmembrane proteins mistargeted to the endoplasmic reticulum. Acts as a dislocase that mediates the ATP-dependent extraction of mislocalized mitochondrial transmembrane proteins from the endoplasmic reticulum membrane. Specifically binds mitochondrial tail-anchored transmembrane proteins: has an atypically large substrate-binding pocket that recognizes and binds moderately hydrophobic transmembranes with short hydrophilic lumenal domains. Involved in controlling nuclear calcium ion levels. Required for cytokinesis and stabilizing microtubules. Required for assembly of the forespore membrane. Involved in calcium transport to the endoplasmic reticulum. The sequence is that of Endoplasmic reticulum transmembrane helix translocase from Schizosaccharomyces pombe (strain 972 / ATCC 24843) (Fission yeast).